Here is a 101-residue protein sequence, read N- to C-terminus: Small ribosomal subunit protein uS14 (101 aa).

This sequence belongs to the universal ribosomal protein uS14 family. Part of the 30S ribosomal subunit. Contacts proteins S3 and S10.

Functionally, binds 16S rRNA, required for the assembly of 30S particles and may also be responsible for determining the conformation of the 16S rRNA at the A site. This is Small ribosomal subunit protein uS14 from Shewanella sp. (strain ANA-3).